The following is a 265-amino-acid chain: Polyglutamine-binding protein 1 (265 aa).

Residues 46 to 80 (EGLPPSWYKVFDPSCGLPYYWNADTDLVSWLSPHD) form the WW domain. A Phosphoserine modification is found at Ser94. Residues 94–265 (SSNADAEEKL…AEASRTKQQD (172 aa)) are disordered. Positions 99-175 (AEEKLDRSHD…DKADREEGKE (77 aa)) are enriched in basic and acidic residues. 15 consecutive repeat copies span residues 104–110 (DRSHDKS), 111–117 (DRGHDKS), 118–124 (DRSHEKL), 125–131 (DRGHDKS), 132–138 (DRGHDKS), 139–140 (DR), 141–142 (DR), 143–144 (ER), 150–151 (DR), 152–153 (ER), 154–155 (ER), 156–157 (DR), 158–159 (ER), 160–161 (DR), and 162–163 (DR). Residues 104-138 (DRSHDKSDRGHDKSDRSHEKLDRGHDKSDRGHDKS) are 5 X 7 AA approximate tandem repeats of D-R-[SG]-H-D-K-S. The 3 X 2 AA tandem repeats of [DE]-R stretch occupies residues 139–144 (DRDRER). The 7 X 2 AA tandem repeats of [DE]-R stretch occupies residues 150–163 (DRERERDRERDRDR). Residues 245 to 255 (YPSPGAVLRAN) form an important for interaction with TXNL4A region. Position 247 is a phosphoserine (Ser247).

In terms of assembly, interacts with POU3F2/Brn-2, ATXN1, TXNL4A, HTT and AR. Interaction with ATXN1 correlates positively with the length of the polyglutamine tract. Interacts with RNA polymerase II large subunit in a phosphorylation-dependent manner. Forms a ternary complex with ATXN1 mutant and phosphorylated RNA polymerase II. Interacts (via C-terminus) with TXNL4A and CD2BP2. Interacts (via WW domain) with ATN1 and SF3B1, and may interact with additional splice factors. Interacts (via WW domain) with WBP11; Leading to reduce interaction between PQBP1 and TXNL4A. Interacts with CAPRIN1. Interacts with DDX1. Interacts with SFPQ. Interacts with KHSRP.

It is found in the nucleus. It localises to the nucleus speckle. The protein localises to the cytoplasmic granule. Its function is as follows. Intrinsically disordered protein that acts as a scaffold, and which is involved in different processes, such as pre-mRNA splicing, transcription regulation, innate immunity and neuron development. Interacts with splicing-related factors via the intrinsically disordered region and regulates alternative splicing of target pre-mRNA species. May suppress the ability of POU3F2 to transactivate the DRD1 gene in a POU3F2 dependent manner. Can activate transcription directly or via association with the transcription machinery. May be involved in ATXN1 mutant-induced cell death. The interaction with ATXN1 mutant reduces levels of phosphorylated RNA polymerase II large subunit. Involved in the assembly of cytoplasmic stress granule, possibly by participating in the transport of neuronal RNA granules. Also acts as an innate immune sensor of infection by retroviruses, by detecting the presence of reverse-transcribed DNA in the cytosol. Directly binds retroviral reverse-transcribed DNA in the cytosol and interacts with CGAS, leading to activate the cGAS-STING signaling pathway, triggering type-I interferon production. In Gorilla gorilla gorilla (Western lowland gorilla), this protein is Polyglutamine-binding protein 1 (PQBP1).